The following is a 367-amino-acid chain: Germination protease (367 aa).

Positions 1-15 are excised as a propeptide; the sequence is MKEPLDLSKYSVRTD.

Belongs to the peptidase A25 family. In terms of assembly, homotetramer. Post-translationally, autoproteolytically processed. The inactive tetrameric zymogen termed p46 autoprocesses to a smaller form termed p41, which is active only during spore germination.

It carries out the reaction Endopeptidase action with P4 Glu or Asp, P1 preferably Glu &gt; Asp, P1' hydrophobic and P2' Ala.. In terms of biological role, initiates the rapid degradation of small, acid-soluble proteins during spore germination. This Bacillus cereus (strain ATCC 10987 / NRS 248) protein is Germination protease.